Here is a 764-residue protein sequence, read N- to C-terminus: 5-methyltetrahydropteroyltriglutamate--homocysteine methyltransferase (764 aa).

5-methyltetrahydropteroyltri-L-glutamate-binding positions include 16–19 and Lys112; that span reads RELK. L-homocysteine-binding positions include 431–433 and Glu484; that span reads IGS. Residues 431–433 and Glu484 each bind L-methionine; that span reads IGS. Residues 515-516 and Trp561 contribute to the 5-methyltetrahydropteroyltri-L-glutamate site; that span reads RC. Position 599 (Asp599) interacts with L-homocysteine. Asp599 serves as a coordination point for L-methionine. Glu605 lines the 5-methyltetrahydropteroyltri-L-glutamate pocket. Zn(2+) contacts are provided by His641, Cys643, and Glu665. His694 acts as the Proton donor in catalysis. Cys726 lines the Zn(2+) pocket.

This sequence belongs to the vitamin-B12 independent methionine synthase family. Zn(2+) is required as a cofactor.

It catalyses the reaction 5-methyltetrahydropteroyltri-L-glutamate + L-homocysteine = tetrahydropteroyltri-L-glutamate + L-methionine. Its pathway is amino-acid biosynthesis; L-methionine biosynthesis via de novo pathway; L-methionine from L-homocysteine (MetE route): step 1/1. In terms of biological role, catalyzes the transfer of a methyl group from 5-methyltetrahydrofolate to homocysteine resulting in methionine formation. In Paraburkholderia xenovorans (strain LB400), this protein is 5-methyltetrahydropteroyltriglutamate--homocysteine methyltransferase.